The following is a 133-amino-acid chain: Classical arabinogalactan protein 5 (133 aa).

An N-terminal signal peptide occupies residues 1 to 21 (MASKSVVVFLFLALVASSVVA). At Gln22 the chain carries Pyrrolidone carboxylic acid. The interval 23–110 (APGPAPTISP…QSPLSGSPNA (88 aa)) is disordered. Pro residues predominate over residues 25 to 37 (GPAPTISPLPATP). The span at 38-48 (TPSQSPRATAP) shows a compositional bias: low complexity. Pro residues predominate over residues 49–81 (APSPSANPPPSAPTTAPPVSQPPTESPPAPPTS). Asn109 is lipidated: GPI-anchor amidated asparagine. A propeptide spans 110–133 (AAAVSRVSLVGTFAGVAVIAALLL) (removed in mature form).

It belongs to the classical AGP family. Post-translationally, O-glycosylated on the hydroxyproline residues. As to expression, expressed at a low level in flowers and siliques.

It localises to the cell membrane. Proteoglycan that seems to be implicated in diverse developmental roles such as differentiation, cell-cell recognition, embryogenesis and programmed cell death. This chain is Classical arabinogalactan protein 5 (AGP5), found in Arabidopsis thaliana (Mouse-ear cress).